The following is a 327-amino-acid chain: Phenylalanine--tRNA ligase alpha subunit (327 aa).

Glutamate 252 contributes to the Mg(2+) binding site.

Belongs to the class-II aminoacyl-tRNA synthetase family. Phe-tRNA synthetase alpha subunit type 1 subfamily. In terms of assembly, tetramer of two alpha and two beta subunits. Mg(2+) serves as cofactor.

Its subcellular location is the cytoplasm. It carries out the reaction tRNA(Phe) + L-phenylalanine + ATP = L-phenylalanyl-tRNA(Phe) + AMP + diphosphate + H(+). The sequence is that of Phenylalanine--tRNA ligase alpha subunit from Aeromonas hydrophila subsp. hydrophila (strain ATCC 7966 / DSM 30187 / BCRC 13018 / CCUG 14551 / JCM 1027 / KCTC 2358 / NCIMB 9240 / NCTC 8049).